A 226-amino-acid chain; its full sequence is MSCTEAPQPIPAGTTTTSTIIALGPTGRLSISVEGDLECLVCREPYNCARSPKLLSCQHTFCAVCLKLLLYVQEDTWSIPCPLCRKVTAVPGGLICSLRDQEAMVGRLALPCPEVRLCPQRLVGSAASATRPANWTGEEEQDTVSVNRVAARRLAVHLLLLALVIVLILPFIYPGVIRWVLAFVIALALLMSTLFCCHPQSQNSNWLCPRTLFCREQKQTQITSIA.

An RING-type zinc finger spans residues 39 to 85 (CLVCREPYNCARSPKLLSCQHTFCAVCLKLLLYVQEDTWSIPCPLCR). The next 2 membrane-spanning stretches (helical) occupy residues 157–177 (HLLLLALVIVLILPFIYPGVI) and 179–199 (WVLAFVIALALLMSTLFCCHP).

Interacts with BNIP1. Post-translationally, polyubiquitinated. 'Lys-29'-linked autoubiquitination leads to proteasomal degradation.

The protein resides in the endoplasmic reticulum membrane. It catalyses the reaction S-ubiquitinyl-[E2 ubiquitin-conjugating enzyme]-L-cysteine + [acceptor protein]-L-lysine = [E2 ubiquitin-conjugating enzyme]-L-cysteine + N(6)-ubiquitinyl-[acceptor protein]-L-lysine.. The protein operates within protein modification; protein ubiquitination. In terms of biological role, E3 ubiquitin protein ligase that is part of an apoptotic signaling pathway activated by endoplasmic reticulum stress. Stimulates the expression of proteins specific of the unfolded protein response (UPR), ubiquitinates BNIP1 and regulates its localization to the mitochondrion and induces calcium release from the endoplasmic reticulum that ultimately leads to cell apoptosis. Plays a role in the maintenance of intestinal homeostasis and clearance of enteric pathogens. Upon NOD2 stimulation, ubiquitinates the ER stress sensor activating transcription factor 6/ATF6 and promotes the unfolded protein response UPR. Participates in basal level of autophagy maintenance by regulating the ubiquitination of EPHB2. Upon stimulation by ligand EFNB1, ubiquitinates EPHB2 and further recruits MAP1LC3B for autophagy induction. Controls nutrient sensing by ubiquitinating Sestrin-2/SESN2, which is an intracellular sensor of cytosolic leucine and inhibitor of mTORC1 activity. The protein is E3 ubiquitin-protein ligase RNF186 of Mus musculus (Mouse).